A 255-amino-acid chain; its full sequence is Ribonuclease HII (255 aa).

One can recognise an RNase H type-2 domain in the interval 70–255 (EYIAGVDEVG…FEPVKKILLK (186 aa)). Residues Asp76, Glu77, and Asp168 each contribute to the a divalent metal cation site.

The protein belongs to the RNase HII family. Mn(2+) serves as cofactor. Requires Mg(2+) as cofactor.

Its subcellular location is the cytoplasm. It catalyses the reaction Endonucleolytic cleavage to 5'-phosphomonoester.. Its function is as follows. Endonuclease that specifically degrades the RNA of RNA-DNA hybrids. The protein is Ribonuclease HII of Ligilactobacillus salivarius (strain UCC118) (Lactobacillus salivarius).